The sequence spans 37 residues: Cytochrome b6-f complex subunit 5 (37 aa).

The helical transmembrane segment at 5 to 25 (FLFGIVLGLIPITLTGLFVTA) threads the bilayer.

This sequence belongs to the PetG family. In terms of assembly, the 4 large subunits of the cytochrome b6-f complex are cytochrome b6, subunit IV (17 kDa polypeptide, PetD), cytochrome f and the Rieske protein, while the 4 small subunits are PetG, PetL, PetM and PetN. The complex functions as a dimer.

It is found in the plastid. The protein resides in the chloroplast thylakoid membrane. Component of the cytochrome b6-f complex, which mediates electron transfer between photosystem II (PSII) and photosystem I (PSI), cyclic electron flow around PSI, and state transitions. PetG is required for either the stability or assembly of the cytochrome b6-f complex. The polypeptide is Cytochrome b6-f complex subunit 5 (Phalaenopsis aphrodite subsp. formosana (Moth orchid)).